The following is a 154-amino-acid chain: Deoxyuridine 5'-triphosphate nucleotidohydrolase (154 aa).

Residues 64–66 (RSG), asparagine 77, 81–83 (TVD), and lysine 91 contribute to the substrate site.

This sequence belongs to the dUTPase family. In terms of assembly, homotrimer. The cofactor is Mg(2+).

It carries out the reaction dUTP + H2O = dUMP + diphosphate + H(+). Its pathway is pyrimidine metabolism; dUMP biosynthesis; dUMP from dCTP (dUTP route): step 2/2. In terms of biological role, this enzyme is involved in nucleotide metabolism: it produces dUMP, the immediate precursor of thymidine nucleotides and it decreases the intracellular concentration of dUTP so that uracil cannot be incorporated into DNA. In Mycolicibacterium gilvum (strain PYR-GCK) (Mycobacterium gilvum (strain PYR-GCK)), this protein is Deoxyuridine 5'-triphosphate nucleotidohydrolase.